The chain runs to 284 residues: Bifunctional protein FolD (284 aa).

Residues 163 to 165 (GAS), Ile-188, and Ile-229 each bind NADP(+).

It belongs to the tetrahydrofolate dehydrogenase/cyclohydrolase family. As to quaternary structure, homodimer.

It carries out the reaction (6R)-5,10-methylene-5,6,7,8-tetrahydrofolate + NADP(+) = (6R)-5,10-methenyltetrahydrofolate + NADPH. The catalysed reaction is (6R)-5,10-methenyltetrahydrofolate + H2O = (6R)-10-formyltetrahydrofolate + H(+). It functions in the pathway one-carbon metabolism; tetrahydrofolate interconversion. Its function is as follows. Catalyzes the oxidation of 5,10-methylenetetrahydrofolate to 5,10-methenyltetrahydrofolate and then the hydrolysis of 5,10-methenyltetrahydrofolate to 10-formyltetrahydrofolate. This is Bifunctional protein FolD from Nautilia profundicola (strain ATCC BAA-1463 / DSM 18972 / AmH).